The primary structure comprises 357 residues: Actin, cytoplasmic (357 aa).

The protein belongs to the actin family. In terms of processing, met-1 may be removed after translation.

Its subcellular location is the cytoplasm. The protein resides in the cytoskeleton. It carries out the reaction ATP + H2O = ADP + phosphate + H(+). In terms of biological role, actins are highly conserved proteins that are involved in various types of cell motility and are ubiquitously expressed in all eukaryotic cells. The sequence is that of Actin, cytoplasmic from Oxytricha fallax.